Here is a 609-residue protein sequence, read N- to C-terminus: Glutamine--fructose-6-phosphate aminotransferase [isomerizing] (609 aa).

Cys2 (nucleophile; for GATase activity) is an active-site residue. The Glutamine amidotransferase type-2 domain occupies 2–219 (CGIFGYLGSK…SGELAIVGLG (218 aa)). SIS domains lie at 280 to 426 (ISEK…SKHT) and 458 to 599 (WAHT…IDCP). Lys604 (for Fru-6P isomerization activity) is an active-site residue.

As to quaternary structure, homodimer.

It is found in the cytoplasm. It carries out the reaction D-fructose 6-phosphate + L-glutamine = D-glucosamine 6-phosphate + L-glutamate. Catalyzes the first step in hexosamine metabolism, converting fructose-6P into glucosamine-6P using glutamine as a nitrogen source. This is Glutamine--fructose-6-phosphate aminotransferase [isomerizing] from Chlamydia abortus (strain DSM 27085 / S26/3) (Chlamydophila abortus).